The sequence spans 657 residues: Histidine ammonia-lyase (657 aa).

Residues 253–255 (ASG) constitute a cross-link (5-imidazolinone (Ala-Gly)). The residue at position 254 (Ser-254) is a 2,3-didehydroalanine (Ser). The residue at position 396 (Thr-396) is a Phosphothreonine. Ser-635 bears the Phosphoserine mark. Residue Thr-637 is modified to Phosphothreonine. Ser-648 is subject to Phosphoserine.

This sequence belongs to the PAL/histidase family. Contains an active site 4-methylidene-imidazol-5-one (MIO), which is formed autocatalytically by cyclization and dehydration of residues Ala-Ser-Gly. As to expression, liver and skin.

It carries out the reaction L-histidine = trans-urocanate + NH4(+). It participates in amino-acid degradation; L-histidine degradation into L-glutamate; N-formimidoyl-L-glutamate from L-histidine: step 1/3. The protein is Histidine ammonia-lyase (Hal) of Rattus norvegicus (Rat).